Consider the following 380-residue polypeptide: Probable tRNA-splicing endonuclease subunit sen2 (380 aa).

Active-site residues include Tyr281, His289, and Lys325.

Belongs to the tRNA-intron endonuclease family. As to quaternary structure, heterotetramer composed of sen2, sen15, sen34 and sen54. Interacts directly with sen54.

It carries out the reaction pretRNA = a 3'-half-tRNA molecule with a 5'-OH end + a 5'-half-tRNA molecule with a 2',3'-cyclic phosphate end + an intron with a 2',3'-cyclic phosphate and a 5'-hydroxyl terminus.. Constitutes one of the two catalytic subunit of the tRNA-splicing endonuclease complex, a complex responsible for identification and cleavage of the splice sites in pre-tRNA. It cleaves pre-tRNA at the 5'- and 3'-splice sites to release the intron. The products are an intron and two tRNA half-molecules bearing 2',3'-cyclic phosphate and 5'-OH termini. There are no conserved sequences at the splice sites, but the intron is invariably located at the same site in the gene, placing the splice sites an invariant distance from the constant structural features of the tRNA body. This subunit may anchor the endonuclease complex to the nuclear membrane. Probably carries the active site for 5'-splice site cleavage. The sequence is that of Probable tRNA-splicing endonuclease subunit sen2 (sen2) from Schizosaccharomyces pombe (strain 972 / ATCC 24843) (Fission yeast).